The sequence spans 115 residues: Evasin P1181 (115 aa).

The signal sequence occupies residues 1–25; that stretch reads MALNWSFRVIFVSAMWCALLKFATL. Intrachain disulfides connect C38/C58, C54/C94, C70/C99, and C89/C108. 3 N-linked (GlcNAc...) asparagine glycosylation sites follow: N45, N72, and N103.

Its subcellular location is the secreted. Functionally, salivary chemokine-binding protein which binds to host chemokines CCL3 and CCL4. This chain is Evasin P1181, found in Amblyomma maculatum (Gulf Coast tick).